The primary structure comprises 572 residues: Proline--tRNA ligase (572 aa).

The protein belongs to the class-II aminoacyl-tRNA synthetase family. ProS type 1 subfamily. In terms of assembly, homodimer.

The protein resides in the cytoplasm. It catalyses the reaction tRNA(Pro) + L-proline + ATP = L-prolyl-tRNA(Pro) + AMP + diphosphate. Its function is as follows. Catalyzes the attachment of proline to tRNA(Pro) in a two-step reaction: proline is first activated by ATP to form Pro-AMP and then transferred to the acceptor end of tRNA(Pro). As ProRS can inadvertently accommodate and process non-cognate amino acids such as alanine and cysteine, to avoid such errors it has two additional distinct editing activities against alanine. One activity is designated as 'pretransfer' editing and involves the tRNA(Pro)-independent hydrolysis of activated Ala-AMP. The other activity is designated 'posttransfer' editing and involves deacylation of mischarged Ala-tRNA(Pro). The misacylated Cys-tRNA(Pro) is not edited by ProRS. This chain is Proline--tRNA ligase, found in Shigella dysenteriae serotype 1 (strain Sd197).